Here is a 312-residue protein sequence, read N- to C-terminus: Putative pyridoxal kinase BUD16 (312 aa).

Residues Ser-9, Thr-44, and Tyr-122 each coordinate substrate. ATP is bound by residues 183-184 and 211-223; these read TS and RVPF…TGVG. Asp-224 lines the substrate pocket.

This sequence belongs to the pyridoxine kinase family. A divalent metal cation is required as a cofactor.

It is found in the cytoplasm. The protein resides in the nucleus. The enzyme catalyses pyridoxal + ATP = pyridoxal 5'-phosphate + ADP + H(+). In terms of biological role, required for synthesis of pyridoxal-5-phosphate from vitamin B6. Important for bud site selection. The chain is Putative pyridoxal kinase BUD16 (BUD16) from Saccharomyces cerevisiae (strain ATCC 204508 / S288c) (Baker's yeast).